The chain runs to 396 residues: MAKAKFERTKPHVNIGTIGHVDHGKTTLTAAISKVLYDKYPDLNEARDFATIDSAPEERQRGITINISHVEYQTEKRHYAHVDAPGHADYIKNMITGAAQMDGAILVVAATDGPMAQTREHVLLARQVGVPALLVALNKSDMVEDEELLELVEMEVRELLSSQEFDGDEAPVIRTSGLKALEGDPQWVKSVEDLMDAVDEYIPDPVRDKDKPFLMPIEDVFTITGRGTVVTGRAERGTLKINSEVEIVGIRDVQKTTVTGIEMFHKQLDEAWAGENCGLLLRGLKRDDVERGQVVVEPGSITPHTNFEANVYILSKDEGGRHNPFYSNYRPQFYFRTTDVTGVITLPEGTEMVMPGDTTEMSVELIQPIAMEEGLGFAIREGGRTVGSGRVTKITK.

One can recognise a tr-type G domain in the interval 10–206 (KPHVNIGTIG…AVDEYIPDPV (197 aa)). The segment at 19–26 (GHVDHGKT) is G1. 19 to 26 (GHVDHGKT) contributes to the GTP binding site. T26 contributes to the Mg(2+) binding site. The tract at residues 62–66 (GITIN) is G2. The tract at residues 83-86 (DAPG) is G3. GTP is bound by residues 83-87 (DAPGH) and 138-141 (NKSD). The tract at residues 138-141 (NKSD) is G4. Residues 176-178 (SGL) form a G5 region.

Belongs to the TRAFAC class translation factor GTPase superfamily. Classic translation factor GTPase family. EF-Tu/EF-1A subfamily. Monomer.

It is found in the cytoplasm. The enzyme catalyses GTP + H2O = GDP + phosphate + H(+). In terms of biological role, GTP hydrolase that promotes the GTP-dependent binding of aminoacyl-tRNA to the A-site of ribosomes during protein biosynthesis. This Micrococcus luteus (strain ATCC 4698 / DSM 20030 / JCM 1464 / CCM 169 / CCUG 5858 / IAM 1056 / NBRC 3333 / NCIMB 9278 / NCTC 2665 / VKM Ac-2230) (Micrococcus lysodeikticus) protein is Elongation factor Tu.